We begin with the raw amino-acid sequence, 45 residues long: Endo-1,4-beta-xylanase Xyn10A (45 aa).

The protein belongs to the glycosyl hydrolase 10 (cellulase F) family.

It localises to the secreted. It is found in the extracellular space. It carries out the reaction Endohydrolysis of (1-&gt;4)-beta-D-xylosidic linkages in xylans.. The catalysed reaction is Endohydrolysis of (1-&gt;4)-beta-D-glucosidic linkages in cellulose, lichenin and cereal beta-D-glucans.. It functions in the pathway glycan degradation; xylan degradation. Has xylanase, avicelase and cellobiohydrolase activity. This chain is Endo-1,4-beta-xylanase Xyn10A, found in Gloeophyllum trabeum (Brown rot fungus).